A 377-amino-acid polypeptide reads, in one-letter code: Guanine nucleotide-binding protein subunit beta (377 aa).

WD repeat units follow at residues 63 to 93 (GHTGKVYSLDWTPEKNRIVSASQDGRLIVWN), 105 to 135 (LPCAWVMTCAFSPSGHSVACGGLDSVCSIFN), 154 to 185 (GHKGYVSSCQYVPDEDTHLITSSGDQTCVLWD), 202 to 233 (GHTADVQSVSISSSNPRLFVSGSCDTTARLWD), 246 to 276 (CHEGDVNTVKFFPDGNRFGTGSEDGTCRLFD), 293 to 323 (GDIPHVTSMAFSISGRLLFVRYSNGDCYVWD), and 339 to 369 (SHEGXISCLGLSADGXXLCTGSWDTNLKIWA).

The protein belongs to the WD repeat G protein beta family. As to quaternary structure, g proteins are composed of 3 units, alpha, beta and gamma.

The protein resides in the cell membrane. The protein localises to the endoplasmic reticulum membrane. Guanine nucleotide-binding proteins (G proteins) are involved as a modulator or transducer in various transmembrane signaling systems. The beta and gamma chains are required for the GTPase activity, for replacement of GDP by GTP, and for G protein-effector interaction. This is Guanine nucleotide-binding protein subunit beta from Nicotiana plumbaginifolia (Leadwort-leaved tobacco).